Reading from the N-terminus, the 230-residue chain is Protein GrpE (230 aa).

2 disordered regions span residues 1 to 26 and 209 to 230; these read MADE…DREA and GVSK…EDNA. Over residues 221-230 the composition is skewed to polar residues; the sequence is NGASTSEDNA.

Belongs to the GrpE family. In terms of assembly, homodimer.

The protein resides in the cytoplasm. Participates actively in the response to hyperosmotic and heat shock by preventing the aggregation of stress-denatured proteins, in association with DnaK and GrpE. It is the nucleotide exchange factor for DnaK and may function as a thermosensor. Unfolded proteins bind initially to DnaJ; upon interaction with the DnaJ-bound protein, DnaK hydrolyzes its bound ATP, resulting in the formation of a stable complex. GrpE releases ADP from DnaK; ATP binding to DnaK triggers the release of the substrate protein, thus completing the reaction cycle. Several rounds of ATP-dependent interactions between DnaJ, DnaK and GrpE are required for fully efficient folding. The protein is Protein GrpE of Brucella suis biovar 1 (strain 1330).